Consider the following 395-residue polypeptide: HORMA domain-containing protein 1 (395 aa).

Residues 24-226 (QQSLVLVKRL…TPFHTFKVKV (203 aa)) enclose the HORMA domain. The interval 329 to 395 (DVSESKTRSG…RKFSEPKEYV (67 aa)) is disordered. Polar residues predominate over residues 344–353 (KMANGNQPVK). Over residues 354 to 363 (SSKENRKRNQ) the composition is skewed to basic and acidic residues. Serine 377 is subject to Phosphoserine. The Nuclear localization signal motif lies at 384-387 (KRRK).

In terms of assembly, interacts with HORMAD2. Interacts with IHO1. In terms of processing, phosphorylated at Ser-378 in a SPO11-dependent manner.

It is found in the nucleus. It localises to the chromosome. Functionally, plays a key role in meiotic progression. Regulates 3 different functions during meiosis: ensures that sufficient numbers of processed DNA double-strand breaks (DSBs) are available for successful homology search by increasing the steady-state numbers of single-stranded DSB ends. Promotes synaptonemal-complex formation independently of its role in homology search. Plays a key role in the male mid-pachytene checkpoint and the female meiotic prophase checkpoint: required for efficient build-up of ATR activity on unsynapsed chromosome regions, a process believed to form the basis of meiotic silencing of unsynapsed chromatin (MSUC) and meiotic prophase quality control in both sexes. In Canis lupus familiaris (Dog), this protein is HORMA domain-containing protein 1 (HORMAD1).